Here is a 139-residue protein sequence, read N- to C-terminus: Putative nickel-responsive regulator (139 aa).

Ni(2+) is bound by residues His79, His90, His92, and Cys98.

The protein belongs to the transcriptional regulatory CopG/NikR family. Ni(2+) serves as cofactor.

Its function is as follows. Transcriptional regulator. The sequence is that of Putative nickel-responsive regulator from Solidesulfovibrio magneticus (strain ATCC 700980 / DSM 13731 / RS-1) (Desulfovibrio magneticus).